A 449-amino-acid polypeptide reads, in one-letter code: Hyaluronidase-3 (449 aa).

The first 23 residues, 1–23 (MYHIWIKFLAAWIFLKKFNGVHV), serve as a signal peptide directing secretion. 2 disulfides stabilise this stretch: Cys-47–Cys-340 and Cys-211–Cys-227. N-linked (GlcNAc...) asparagine glycosylation is found at Asn-67, Asn-103, and Asn-111. The active-site Proton donor is the Glu-135. The N-linked (GlcNAc...) asparagine glycan is linked to Asn-153. An N-linked (GlcNAc...) asparagine glycan is attached at Asn-357. 3 cysteine pairs are disulfide-bonded: Cys-365–Cys-376, Cys-370–Cys-427, and Cys-429–Cys-438. N-linked (GlcNAc...) asparagine glycosylation is present at Asn-401. Positions 427–438 (CQCYQGWKGLYC) constitute an EGF-like domain.

It belongs to the glycosyl hydrolase 56 family. In terms of assembly, monomer. Expressed by the venom gland.

It is found in the secreted. It catalyses the reaction Random hydrolysis of (1-&gt;4)-linkages between N-acetyl-beta-D-glucosamine and D-glucuronate residues in hyaluronate.. Snake venom endo-hyaluronidase that degrades hyaluronan to smaller oligosaccharide fragments. In venom, it is not toxic by itself, but increases the diffusion of other venom proteins by degrading the extracellular matrix. In addition, it displays antiedematogenic activity. The chain is Hyaluronidase-3 from Cerastes cerastes (Horned desert viper).